Consider the following 295-residue polypeptide: MGFVKVVKNKAYFKRYQVKYKRRRQGKTDYFARKRLVVQDKNKYNTPKYRMIVRFTNKDIVCQIAYARIEGDVVICAAYAHELPRYGVKVGLTNYAAAYCTGLLLSRRLLNKFGLDEIYEGQTEIDGDEFYVEDVDGKPGAFRAFLDVGLARTTTGAKVFGAMKGAADGGLDIPHSTKRFPGYDDESGDFSAEVHRSHIFGGHVSNYMKELEEEDEEAFKRQFSQYIKHGVTADTVEEMYTKAHAAIREDPTPKKKTDFAGKTKRWNRKKMTFSQRRDRVKQKKASFLRAKQQEG.

Positions 251–261 are enriched in basic and acidic residues; it reads PTPKKKTDFAG. The interval 251 to 295 is disordered; the sequence is PTPKKKTDFAGKTKRWNRKKMTFSQRRDRVKQKKASFLRAKQQEG. Residues 262–271 show a composition bias toward basic residues; sequence KTKRWNRKKM.

The protein belongs to the universal ribosomal protein uL18 family. In terms of assembly, component of the large ribosomal subunit (LSU).

The protein localises to the cytoplasm. Its subcellular location is the nucleus. Functionally, component of the ribosome, a large ribonucleoprotein complex responsible for the synthesis of proteins in the cell. The small ribosomal subunit (SSU) binds messenger RNAs (mRNAs) and translates the encoded message by selecting cognate aminoacyl-transfer RNA (tRNA) molecules. The large subunit (LSU) contains the ribosomal catalytic site termed the peptidyl transferase center (PTC), which catalyzes the formation of peptide bonds, thereby polymerizing the amino acids delivered by tRNAs into a polypeptide chain. The nascent polypeptides leave the ribosome through a tunnel in the LSU and interact with protein factors that function in enzymatic processing, targeting, and the membrane insertion of nascent chains at the exit of the ribosomal tunnel. This chain is Large ribosomal subunit protein uL18 (RPL5), found in Styela clava (Sea squirt).